The chain runs to 275 residues: Shikimate dehydrogenase (NADP(+)) (275 aa).

Shikimate contacts are provided by residues 19–21 (SIS) and threonine 66. Catalysis depends on lysine 70, which acts as the Proton acceptor. NADP(+) is bound at residue glutamate 82. Positions 91 and 106 each coordinate shikimate. Residues 129 to 133 (GAGGA), 153 to 158 (NRTYER), and isoleucine 219 each bind NADP(+). Tyrosine 221 contacts shikimate. Glycine 242 is an NADP(+) binding site.

It belongs to the shikimate dehydrogenase family. Homodimer.

The enzyme catalyses shikimate + NADP(+) = 3-dehydroshikimate + NADPH + H(+). It functions in the pathway metabolic intermediate biosynthesis; chorismate biosynthesis; chorismate from D-erythrose 4-phosphate and phosphoenolpyruvate: step 4/7. Involved in the biosynthesis of the chorismate, which leads to the biosynthesis of aromatic amino acids. Catalyzes the reversible NADPH linked reduction of 3-dehydroshikimate (DHSA) to yield shikimate (SA). This chain is Shikimate dehydrogenase (NADP(+)), found in Dictyoglomus turgidum (strain DSM 6724 / Z-1310).